A 481-amino-acid polypeptide reads, in one-letter code: Bifunctional protein GlmU (481 aa).

The interval 1–235 is pyrophosphorylase; sequence MTHKERPLDV…PDEVMGANDR (235 aa). UDP-N-acetyl-alpha-D-glucosamine-binding positions include 13 to 16, lysine 27, glutamine 78, 83 to 84, 107 to 109, glycine 146, glutamate 161, asparagine 176, and asparagine 233; these read LAAG, GT, and YGD. A Mg(2+)-binding site is contributed by aspartate 109. Asparagine 233 serves as a coordination point for Mg(2+). The tract at residues 236-256 is linker; the sequence is VQLAQAAAVLRRRINTAHMQA. An N-acetyltransferase region spans residues 257–481; it reads GVTLQDPSTI…PWLAGWLERQ (225 aa). Positions 339 and 357 each coordinate UDP-N-acetyl-alpha-D-glucosamine. Catalysis depends on histidine 369, which acts as the Proton acceptor. The UDP-N-acetyl-alpha-D-glucosamine site is built by tyrosine 372 and asparagine 383. Alanine 386, serine 411, alanine 429, and arginine 446 together coordinate acetyl-CoA.

This sequence in the N-terminal section; belongs to the N-acetylglucosamine-1-phosphate uridyltransferase family. It in the C-terminal section; belongs to the transferase hexapeptide repeat family. In terms of assembly, homotrimer. Requires Mg(2+) as cofactor.

Its subcellular location is the cytoplasm. The enzyme catalyses alpha-D-glucosamine 1-phosphate + acetyl-CoA = N-acetyl-alpha-D-glucosamine 1-phosphate + CoA + H(+). It catalyses the reaction N-acetyl-alpha-D-glucosamine 1-phosphate + UTP + H(+) = UDP-N-acetyl-alpha-D-glucosamine + diphosphate. It participates in nucleotide-sugar biosynthesis; UDP-N-acetyl-alpha-D-glucosamine biosynthesis; N-acetyl-alpha-D-glucosamine 1-phosphate from alpha-D-glucosamine 6-phosphate (route II): step 2/2. Its pathway is nucleotide-sugar biosynthesis; UDP-N-acetyl-alpha-D-glucosamine biosynthesis; UDP-N-acetyl-alpha-D-glucosamine from N-acetyl-alpha-D-glucosamine 1-phosphate: step 1/1. It functions in the pathway bacterial outer membrane biogenesis; LPS lipid A biosynthesis. Catalyzes the last two sequential reactions in the de novo biosynthetic pathway for UDP-N-acetylglucosamine (UDP-GlcNAc). The C-terminal domain catalyzes the transfer of acetyl group from acetyl coenzyme A to glucosamine-1-phosphate (GlcN-1-P) to produce N-acetylglucosamine-1-phosphate (GlcNAc-1-P), which is converted into UDP-GlcNAc by the transfer of uridine 5-monophosphate (from uridine 5-triphosphate), a reaction catalyzed by the N-terminal domain. The protein is Bifunctional protein GlmU of Deinococcus geothermalis (strain DSM 11300 / CIP 105573 / AG-3a).